The sequence spans 1403 residues: Baculoviral IAP repeat-containing protein 1a (1403 aa).

BIR repeat units follow at residues 63-128 (RLKT…EFLQ), 162-228 (RLES…EFLQ), and 281-346 (RMDT…VFLQ). Zn(2+)-binding residues include cysteine 315, cysteine 318, histidine 335, and cysteine 342. Positions 464-758 (SVMCVEGETG…EFLAAMRLTE (295 aa)) constitute an NACHT domain. ATP is bound at residue lysine 476.

As to quaternary structure, interacts (via NACHT domain) with APAF1 (via CARD and NACHT domains).

In terms of biological role, anti-apoptotic protein which acts by inhibiting the activities of CASP3, CASP7 and CASP9. Can inhibit the autocleavage of pro-CASP9 and cleavage of pro-CASP3 by CASP9. Capable of inhibiting CASP9 autoproteolysis at 'Asp-315' and decreasing the rate of auto proteolysis at 'Asp-330'. Acts as a mediator of neuronal survival in pathological conditions. Prevents motor-neuron apoptosis induced by a variety of signals. The polypeptide is Baculoviral IAP repeat-containing protein 1a (Naip1) (Mus musculus (Mouse)).